The sequence spans 510 residues: 2-isopropylmalate synthase (510 aa).

The Pyruvate carboxyltransferase domain occupies 5–267 (LVIFDTTLRD…DTRIDTTQIV (263 aa)). 4 residues coordinate Mn(2+): D14, H202, H204, and N238. Positions 392 to 510 (RLLSLHAVSE…SSLERTHPQI (119 aa)) are regulatory domain.

This sequence belongs to the alpha-IPM synthase/homocitrate synthase family. LeuA type 1 subfamily. In terms of assembly, homodimer. The cofactor is Mn(2+).

It localises to the cytoplasm. It catalyses the reaction 3-methyl-2-oxobutanoate + acetyl-CoA + H2O = (2S)-2-isopropylmalate + CoA + H(+). It participates in amino-acid biosynthesis; L-leucine biosynthesis; L-leucine from 3-methyl-2-oxobutanoate: step 1/4. In terms of biological role, catalyzes the condensation of the acetyl group of acetyl-CoA with 3-methyl-2-oxobutanoate (2-ketoisovalerate) to form 3-carboxy-3-hydroxy-4-methylpentanoate (2-isopropylmalate). The chain is 2-isopropylmalate synthase from Nitrosomonas europaea (strain ATCC 19718 / CIP 103999 / KCTC 2705 / NBRC 14298).